Reading from the N-terminus, the 754-residue chain is Protein NUCLEOLAR FACTOR 1 (754 aa).

Disordered stretches follow at residues 1–56 (MAPN…EAMV), 69–166 (SLGS…ELST), and 390–413 (EDTD…QKSS). Acidic residues predominate over residues 42 to 52 (SPEESSIEAES). The segment covering 80-93 (MNKRRQREEEGKSD) has biased composition (basic and acidic residues). Composition is skewed to acidic residues over residues 94–110 (TEED…ENSG) and 138–161 (DTQE…DEEV). The segment covering 402-413 (SKNGNSIKQKSS) has biased composition (polar residues).

It belongs to the UTP25 family. Component of the ribosomal small subunit (SSU) processome composed of at least 40 protein subunits and snoRNA U3. Interacts with THAL in the nucleus. As to expression, preferentially expressed in differentiating cells in young tissues such as floral buds, ovules, embryos, secondary roots, pollen, young seedlings and vascular bundles. Observed ubiquitously.

The protein resides in the nucleus. It localises to the nucleolus. DEAD-box RNA helicase-like protein required for pre-18S rRNA processing, specifically at sites A0, A1, and A2. Involved in the control of rRNA expression. Required for embryo development and female gametogenesis. The sequence is that of Protein NUCLEOLAR FACTOR 1 from Arabidopsis thaliana (Mouse-ear cress).